We begin with the raw amino-acid sequence, 580 residues long: V-type proton ATPase catalytic subunit A (580 aa).

209-216 is an ATP binding site; that stretch reads GAFGCGKT.

The protein belongs to the ATPase alpha/beta chains family. V-ATPase is a heteromultimeric enzyme composed of a peripheral catalytic V1 complex (main components: subunits A, B, C, D, E, and F) attached to an integral membrane V0 proton pore complex (main component: the proteolipid protein).

The enzyme catalyses ATP + H2O + 4 H(+)(in) = ADP + phosphate + 5 H(+)(out). Its function is as follows. Catalytic subunit of the peripheral V1 complex of vacuolar ATPase. V-ATPase vacuolar ATPase is responsible for acidifying a variety of intracellular compartments in eukaryotic cells. The polypeptide is V-type proton ATPase catalytic subunit A (Hordeum vulgare (Barley)).